The chain runs to 486 residues: Ribosomal RNA small subunit methyltransferase F (486 aa).

Residues 124 to 130 (ASAPGSK), Glu-148, Asp-175, and Asp-193 contribute to the S-adenosyl-L-methionine site. The active-site Nucleophile is the Cys-246.

The protein belongs to the class I-like SAM-binding methyltransferase superfamily. RsmB/NOP family.

The protein resides in the cytoplasm. It carries out the reaction cytidine(1407) in 16S rRNA + S-adenosyl-L-methionine = 5-methylcytidine(1407) in 16S rRNA + S-adenosyl-L-homocysteine + H(+). In terms of biological role, specifically methylates the cytosine at position 1407 (m5C1407) of 16S rRNA. This chain is Ribosomal RNA small subunit methyltransferase F, found in Shewanella putrefaciens (strain CN-32 / ATCC BAA-453).